The primary structure comprises 437 residues: Methylenetetrahydrofolate--tRNA-(uracil-5-)-methyltransferase TrmFO (437 aa).

8–13 (GAGLAG) is a binding site for FAD.

It belongs to the MnmG family. TrmFO subfamily. The cofactor is FAD.

It is found in the cytoplasm. It carries out the reaction uridine(54) in tRNA + (6R)-5,10-methylene-5,6,7,8-tetrahydrofolate + NADH + H(+) = 5-methyluridine(54) in tRNA + (6S)-5,6,7,8-tetrahydrofolate + NAD(+). The enzyme catalyses uridine(54) in tRNA + (6R)-5,10-methylene-5,6,7,8-tetrahydrofolate + NADPH + H(+) = 5-methyluridine(54) in tRNA + (6S)-5,6,7,8-tetrahydrofolate + NADP(+). Catalyzes the folate-dependent formation of 5-methyl-uridine at position 54 (M-5-U54) in all tRNAs. This Desulfitobacterium hafniense (strain Y51) protein is Methylenetetrahydrofolate--tRNA-(uracil-5-)-methyltransferase TrmFO.